The primary structure comprises 614 residues: Glucose oxidase 1 (614 aa).

An N-terminal signal peptide occupies residues 1–15; the sequence is MKSIILSCFVISAAA. FAD is bound by residues leucine 52, threonine 53, and glutamate 73. The N-linked (GlcNAc...) asparagine glycan is linked to asparagine 112. Residues 117–136 form a disordered region; sequence IRSGNGLGGSTLTNGGSWTR. Serine 126, asparagine 130, glycine 131, and serine 133 together coordinate FAD. N-linked (GlcNAc...) asparagine glycosylation is found at asparagine 184 and asparagine 191. A disulfide bond links cysteine 187 and cysteine 229. An FAD-binding site is contributed by valine 273. N-linked (GlcNAc...) asparagine glycans are attached at residues asparagine 279, asparagine 383, and asparagine 416. Catalysis depends on histidine 544, which acts as the Proton acceptor. 2 residues coordinate O2: arginine 565 and valine 566. Residues glycine 577 and methionine 589 each contribute to the FAD site.

This sequence belongs to the GMC oxidoreductase family. As to quaternary structure, homodimer. The cofactor is FAD.

The protein resides in the secreted. The protein localises to the cell wall. It is found in the cytoplasm. Its subcellular location is the extracellular space. It localises to the extracellular matrix. It carries out the reaction beta-D-glucose + O2 = D-glucono-1,5-lactone + H2O2. In terms of biological role, glucose oxidase catalyzes the oxidation of beta-D-glucose to D-glucono-delta-lactone and hydrogen peroxide in the presence of molecular oxygen. This Penicillium expansum (Blue mold rot fungus) protein is Glucose oxidase 1.